We begin with the raw amino-acid sequence, 92 residues long: RIIa domain-containing protein 1 (92 aa).

In terms of domain architecture, RIIa spans 43–77 (KEVELLISGFFREMFLKRPDNIPEFAADYFTDPRL).

The chain is RIIa domain-containing protein 1 (RIIAD1) from Bos taurus (Bovine).